The sequence spans 724 residues: MLPNGFSFLNPNLVAAANIQQVLLNQRFGMPPVGSIAQVPLLQMPTHSVVAPHVAAPTRPSPMLVPPGMGIDESHSSPSVESDWSVHTNEKGTPYYHNRVTKQTSWIKPDVLKTPLERSTSGQPQQGQWKEFMSDDGKPYYYNTLTKKTQWVKPDGEEITKGEQKPAAKAATVDTVALAAAVQQKKAESDLDKAMKATLASMPNVPLPSEKKEEESVNDEVELKKRQSERFRELLRDKYNDGKITTNCNWDQAVKWIQNDPRFRILNKVSEKKQLFNAWKVQRGKEERDEKRLAIKKSKEDLEKFLQEHPKMKESLKYQKASDIFSKEPLWIAVNDEDRKEIFRDCIDFVARRDKEKKEEDRKRDIAAFSHVLQSMEQITYKTTWAQAQRILYENPQFAERKDLHFMDKEDALTVFEDHIKQAEKEHDEEKEQEEKRLRRQQRKVREEYRLLLESLHKRGELTSMSLWTSLFPIISTDTRFELMLFQPGSSPLDLFKFFVEDLKEQYTEDRRLIKEILTEKGCQVIATTEYREFSDWVVSHEKGGKVDHGNMKLCYNSLIEKAESKAKDEEKESLRRKRRLESEFRNLLKEHNVDKDSEWTVIKPKIEKDKAYLAMENDDERETAFNHYKNGTSGTTAGSEILEKKKKKKDKKKKNKRSDNNSESEGEIREKEKKKKKKHSKEDRMDDEERGKKSKKSRKRSPSRSESPRHSSEKRKRRESEAD.

WW domains are found at residues 78 to 111 and 123 to 156; these read PSVE…KPDV and QPQQ…KPDG. FF domains lie at 224 to 282, 295 to 349, 353 to 422, 442 to 502, 507 to 562, and 578 to 632; these read KKRQ…WKVQ, IKKS…CIDF, RDKE…HIKQ, QRKV…FVED, YTED…LIEK, and KRRL…YKNG. The tract at residues 626–724 is disordered; that stretch reads FNHYKNGTSG…KRKRRESEAD (99 aa). Over residues 630-639 the composition is skewed to polar residues; it reads KNGTSGTTAG. The span at 645 to 657 shows a compositional bias: basic residues; the sequence is KKKKKKDKKKKNK. A compositionally biased stretch (basic and acidic residues) spans 681–692; sequence SKEDRMDDEERG. Positions 693–703 are enriched in basic residues; sequence KKSKKSRKRSP.

The chain is WW domain-containing protein ZK1098.1 from Caenorhabditis elegans.